We begin with the raw amino-acid sequence, 86 residues long: UPF0335 protein BR1752/BS1330_I1746 (86 aa).

The protein belongs to the UPF0335 family.

This chain is UPF0335 protein BR1752/BS1330_I1746, found in Brucella suis biovar 1 (strain 1330).